A 116-amino-acid polypeptide reads, in one-letter code: Sperm mitochondrial-associated cysteine-rich protein (116 aa).

Repeat copies occupy residues 6–13, 14–21, 30–37, 38–45, 46–53, 54–61, and 62–68. The 7 X 7 (OR 8) AA approximate repeats stretch occupies residues 6–68; that stretch reads KHSKCCPAKG…CQPKPPCCIQ (63 aa). The segment at 80–116 is disordered; the sequence is VSPLNMESEPNSPQTQDKGCQTQQQPHSPQNESRPSK. Residues 93 to 104 are compositionally biased toward low complexity; that stretch reads QTQDKGCQTQQQ. Residues 105–116 show a composition bias toward polar residues; the sequence is PHSPQNESRPSK.

In terms of tissue distribution, testis. Is selectively expressed in the spermatids of seminiferous tubules.

The protein resides in the cytoplasm. The protein localises to the mitochondrion membrane. Functionally, involved in sperm motility. Its absence is associated with genetic background dependent male infertility. Infertility may be due to reduced sperm motility in the female reproductive tract and inability to penetrate the oocyte zona pellucida. This is Sperm mitochondrial-associated cysteine-rich protein (SMCP) from Homo sapiens (Human).